A 457-amino-acid chain; its full sequence is Nuclear hormone receptor family member odr-7 (457 aa).

Disordered stretches follow at residues 57–95 and 230–252; these read EQPN…DNDA and KQES…LQQP. The nuclear receptor DNA-binding region spans 327-407; sequence LHDCQVCLST…IGMLPENVQH (81 aa). 2 NR C4-type zinc fingers span residues 330-351 and 367-395; these read CQVC…CAAC and CKRN…MKRC. A disordered region spans residues 435 to 457; the sequence is QPSGSAAQPITVSSSESPRHTTN.

This sequence belongs to the nuclear hormone receptor family. NR0 subfamily. In terms of assembly, heterodimer with a partner that confers DNA binding capacity or a nuclear hormone receptor whose DNA binding it inhibits. As to expression, expressed predominantly in the AWA neurons.

It is found in the nucleus. It localises to the cytoplasm. The protein localises to the perinuclear region. Its function is as follows. Required for the function of one pair of chemosensory neurons called AWA neurons that are involved in chemotaxis to volatile odorants. Acts in a pathway that specifies olfactory neuronal fate. Regulates the transcription of olfactory signaling molecules such as odr-10 that specify AWA neuron identity and function. Represses the expression in AWA neurons of factors such as str-2 which specify AWC neuron identity. The chain is Nuclear hormone receptor family member odr-7 (odr-7) from Caenorhabditis elegans.